Reading from the N-terminus, the 123-residue chain is Small ribosomal subunit protein uS12 (123 aa).

At aspartate 89 the chain carries 3-methylthioaspartic acid.

The protein belongs to the universal ribosomal protein uS12 family. As to quaternary structure, part of the 30S ribosomal subunit. Contacts proteins S8 and S17. May interact with IF1 in the 30S initiation complex.

With S4 and S5 plays an important role in translational accuracy. Its function is as follows. Interacts with and stabilizes bases of the 16S rRNA that are involved in tRNA selection in the A site and with the mRNA backbone. Located at the interface of the 30S and 50S subunits, it traverses the body of the 30S subunit contacting proteins on the other side and probably holding the rRNA structure together. The combined cluster of proteins S8, S12 and S17 appears to hold together the shoulder and platform of the 30S subunit. This is Small ribosomal subunit protein uS12 from Rhodopseudomonas palustris (strain HaA2).